The following is a 271-amino-acid chain: Putative pyruvate, phosphate dikinase regulatory protein (271 aa).

153–160 provides a ligand contact to ADP; it reads GVSRTSKT.

This sequence belongs to the pyruvate, phosphate/water dikinase regulatory protein family. PDRP subfamily.

It carries out the reaction N(tele)-phospho-L-histidyl/L-threonyl-[pyruvate, phosphate dikinase] + ADP = N(tele)-phospho-L-histidyl/O-phospho-L-threonyl-[pyruvate, phosphate dikinase] + AMP + H(+). The enzyme catalyses N(tele)-phospho-L-histidyl/O-phospho-L-threonyl-[pyruvate, phosphate dikinase] + phosphate + H(+) = N(tele)-phospho-L-histidyl/L-threonyl-[pyruvate, phosphate dikinase] + diphosphate. Bifunctional serine/threonine kinase and phosphorylase involved in the regulation of the pyruvate, phosphate dikinase (PPDK) by catalyzing its phosphorylation/dephosphorylation. This Shouchella clausii (strain KSM-K16) (Alkalihalobacillus clausii) protein is Putative pyruvate, phosphate dikinase regulatory protein.